A 91-amino-acid chain; its full sequence is Acyl carrier protein AsbD (91 aa).

Residues glutamate 4–glutamine 82 enclose the Carrier domain. Serine 40 is subject to O-(pantetheine 4'-phosphoryl)serine.

Belongs to the acyl carrier protein (ACP) family. Post-translationally, activated by the transfer of a 4'-phosphopantetheine group from CoA to Ser-40.

The protein operates within siderophore biosynthesis; petrobactin biosynthesis. In terms of biological role, involved in the biosynthesis of petrobactin, a catecholate siderophore that functions in both iron acquisition and virulence. Aryl-carrier protein that activates 3,4-dihydroxybenzoate (3,4-DHBA) prior to its incorporation into petrobactin. The polypeptide is Acyl carrier protein AsbD (Bacillus anthracis).